The following is a 146-amino-acid chain: Anti-sigma F factor (146 aa).

The protein belongs to the anti-sigma-factor family.

The catalysed reaction is L-seryl-[protein] + ATP = O-phospho-L-seryl-[protein] + ADP + H(+). It catalyses the reaction L-threonyl-[protein] + ATP = O-phospho-L-threonyl-[protein] + ADP + H(+). Functionally, binds to sigma F and blocks its ability to form an RNA polymerase holoenzyme (E-sigma F). Phosphorylates SpoIIAA on a serine residue. This phosphorylation may enable SpoIIAA to act as an anti-anti-sigma factor that counteracts SpoIIAB and thus releases sigma F from inhibition. The chain is Anti-sigma F factor from Bacillus cereus (strain G9842).